The following is a 271-amino-acid chain: Indole-3-glycerol phosphate synthase (271 aa).

This sequence belongs to the TrpC family.

The catalysed reaction is 1-(2-carboxyphenylamino)-1-deoxy-D-ribulose 5-phosphate + H(+) = (1S,2R)-1-C-(indol-3-yl)glycerol 3-phosphate + CO2 + H2O. Its pathway is amino-acid biosynthesis; L-tryptophan biosynthesis; L-tryptophan from chorismate: step 4/5. This chain is Indole-3-glycerol phosphate synthase, found in Haloarcula marismortui (strain ATCC 43049 / DSM 3752 / JCM 8966 / VKM B-1809) (Halobacterium marismortui).